The following is a 152-amino-acid chain: Transcriptional regulator MraZ (152 aa).

2 SpoVT-AbrB domains span residues 5-52 and 81-124; these read ATLV…PLPE and ASEC…DETT.

This sequence belongs to the MraZ family. In terms of assembly, forms oligomers.

It localises to the cytoplasm. Its subcellular location is the nucleoid. Functionally, negatively regulates its own expression and that of the subsequent genes in the proximal part of the division and cell wall (dcw) gene cluster. Acts by binding directly to DNA. May also regulate the expression of genes outside the dcw cluster. This Salmonella paratyphi A (strain ATCC 9150 / SARB42) protein is Transcriptional regulator MraZ.